The primary structure comprises 431 residues: Enolase (431 aa).

Gln-167 serves as a coordination point for (2R)-2-phosphoglycerate. Glu-209 functions as the Proton donor in the catalytic mechanism. Mg(2+)-binding residues include Asp-246, Glu-289, and Asp-316. Lys-341, Arg-370, Ser-371, and Lys-392 together coordinate (2R)-2-phosphoglycerate. Lys-341 serves as the catalytic Proton acceptor.

This sequence belongs to the enolase family. In terms of assembly, component of the RNA degradosome, a multiprotein complex involved in RNA processing and mRNA degradation. It depends on Mg(2+) as a cofactor.

It is found in the cytoplasm. The protein localises to the secreted. Its subcellular location is the cell surface. It carries out the reaction (2R)-2-phosphoglycerate = phosphoenolpyruvate + H2O. Its pathway is carbohydrate degradation; glycolysis; pyruvate from D-glyceraldehyde 3-phosphate: step 4/5. Functionally, catalyzes the reversible conversion of 2-phosphoglycerate (2-PG) into phosphoenolpyruvate (PEP). It is essential for the degradation of carbohydrates via glycolysis. The chain is Enolase from Chromohalobacter salexigens (strain ATCC BAA-138 / DSM 3043 / CIP 106854 / NCIMB 13768 / 1H11).